Consider the following 326-residue polypeptide: Regulation of nuclear pre-mRNA domain-containing protein 1B (326 aa).

At serine 2 the chain carries N-acetylserine. In terms of domain architecture, CID spans 2–133 (SSFSESALEK…QLKLSMEDSK (132 aa)). Residues 127–149 (LSMEDSKSPPPKATEEKKSLKRT) are disordered. The span at 128-144 (SMEDSKSPPPKATEEKK) shows a compositional bias: basic and acidic residues. Phosphoserine occurs at positions 132 and 134. Position 161 is a phosphotyrosine (tyrosine 161). A phosphoserine mark is found at serine 166 and serine 299.

This sequence belongs to the UPF0400 (RTT103) family. In terms of assembly, homodimer. May form a heterodimer with RPRD1A. Associates with RPAP2. Associates with the RNA polymerase II complex. As to expression, preferentially expressed in a range of tumor tissues including colon, lung, liver, breast, prostate, stomach, uterine endometrium and cervical cancers with higher levels in tumors than in adjacent non-tumor tissue (at protein level).

The protein localises to the nucleus. Functionally, interacts with phosphorylated C-terminal heptapeptide repeat domain (CTD) of the largest RNA polymerase II subunit POLR2A, and participates in dephosphorylation of the CTD by RPAP2. Transcriptional regulator which enhances expression of CCND1. Promotes binding of RNA polymerase II to the CCDN1 promoter and to the termination region before the poly-A site but decreases its binding after the poly-A site. Prevents RNA polymerase II from reading through the 3' end termination site and may allow it to be recruited back to the promoter through promotion of the formation of a chromatin loop. Also enhances the transcription of a number of other cell cycle-related genes including CDK2, CDK4, CDK6 and cyclin-E but not CDKN1A, CDKN1B or cyclin-A. Promotes cell proliferation. The sequence is that of Regulation of nuclear pre-mRNA domain-containing protein 1B (RPRD1B) from Homo sapiens (Human).